The chain runs to 31 residues: MISILTYFGILFGILTITVIIFVALNKIQLI.

Residues 4-24 (ILTYFGILFGILTITVIIFVA) form a helical membrane-spanning segment.

It belongs to the PetL family. In terms of assembly, the 4 large subunits of the cytochrome b6-f complex are cytochrome b6, subunit IV (17 kDa polypeptide, PetD), cytochrome f and the Rieske protein, while the 4 small subunits are PetG, PetL, PetM and PetN. The complex functions as a dimer.

The protein localises to the plastid. Its subcellular location is the chloroplast thylakoid membrane. Component of the cytochrome b6-f complex, which mediates electron transfer between photosystem II (PSII) and photosystem I (PSI), cyclic electron flow around PSI, and state transitions. PetL is important for photoautotrophic growth as well as for electron transfer efficiency and stability of the cytochrome b6-f complex. The chain is Cytochrome b6-f complex subunit 6 from Chaetosphaeridium globosum (Charophycean green alga).